Here is a 469-residue protein sequence, read N- to C-terminus: Glutamine synthetase (469 aa).

A GS beta-grasp domain is found at 15-96 (NDVKFIDVRF…INFFIHDPIT (82 aa)). A GS catalytic domain is found at 104–469 (PRNIAKKAEA…PHEFELYFDI (366 aa)). Mg(2+)-binding residues include E129 and E131. E205 is an ATP binding site. Mg(2+) is bound by residues E210 and E218. An ATP-binding site is contributed by 221-223 (YKF). L-glutamate-binding positions include 262 to 263 (NG) and G263. H267 is a Mg(2+) binding site. ATP contacts are provided by residues 269-271 (HQS) and S271. 3 residues coordinate L-glutamate: R320, E326, and R338. Residues R338, R343, and K352 each contribute to the ATP site. Residue E357 coordinates Mg(2+). R359 lines the L-glutamate pocket. Y397 is modified (O-AMP-tyrosine).

This sequence belongs to the glutamine synthetase family. In terms of assembly, oligomer of 12 subunits arranged in the form of two hexagons. Mg(2+) is required as a cofactor.

It is found in the cytoplasm. The catalysed reaction is L-glutamate + NH4(+) + ATP = L-glutamine + ADP + phosphate + H(+). With respect to regulation, the activity of this enzyme could be controlled by adenylation under conditions of abundant glutamine. Catalyzes the ATP-dependent biosynthesis of glutamine from glutamate and ammonia. The protein is Glutamine synthetase of Streptomyces filamentosus (Streptomyces roseosporus).